A 397-amino-acid polypeptide reads, in one-letter code: Tryptophan synthase beta chain (397 aa).

K91 is modified (N6-(pyridoxal phosphate)lysine).

The protein belongs to the TrpB family. As to quaternary structure, tetramer of two alpha and two beta chains. Pyridoxal 5'-phosphate serves as cofactor.

It catalyses the reaction (1S,2R)-1-C-(indol-3-yl)glycerol 3-phosphate + L-serine = D-glyceraldehyde 3-phosphate + L-tryptophan + H2O. The protein operates within amino-acid biosynthesis; L-tryptophan biosynthesis; L-tryptophan from chorismate: step 5/5. Its function is as follows. The beta subunit is responsible for the synthesis of L-tryptophan from indole and L-serine. The chain is Tryptophan synthase beta chain from Bacillus anthracis (strain A0248).